A 417-amino-acid chain; its full sequence is MIDIKLLRENPDFVKERLKTRDESYLKLIDRLLEIDEERRKIIKEIESLRAERNEKSKLFPILKKEGKDTTEIQQRVKQIGEIIKNLEDKLQEIENEFNNILYYIPNLPAPDVPIGKDENDNVEIRRWGKPRKFDFEPLSHYEIGERLGILDFERGAKLSGSRFTVMFKEAARLERALINFMLDVHTKQHGYTEVWTPALVKPEILFGTGQLPKFKDDLYKIEDEDLYLIPTAEVTLTNLHADEILNEEDLPKYYTAYTPCFRKEAGSHGKDVKGILRQHQFDKVELVKIVKPEDSYNELEKLVNEAEKILQLLEIPYRVVLLCTGDMGFSAAKTYDIEVWIPSQNRYREISSCSNTEDFQARRAKIRYKDKDGKNHYVHTLNGSGLAVGRTLIAIMENYQKPDGTFEIPKVLKDYL.

232–234 contacts L-serine; the sequence is TAE. 263–265 contributes to the ATP binding site; sequence RKE. Residue Glu-286 coordinates L-serine. 350–353 lines the ATP pocket; it reads EISS. Ser-385 is a binding site for L-serine.

The protein belongs to the class-II aminoacyl-tRNA synthetase family. Type-1 seryl-tRNA synthetase subfamily. Homodimer. The tRNA molecule binds across the dimer.

The protein resides in the cytoplasm. It catalyses the reaction tRNA(Ser) + L-serine + ATP = L-seryl-tRNA(Ser) + AMP + diphosphate + H(+). The enzyme catalyses tRNA(Sec) + L-serine + ATP = L-seryl-tRNA(Sec) + AMP + diphosphate + H(+). It participates in aminoacyl-tRNA biosynthesis; selenocysteinyl-tRNA(Sec) biosynthesis; L-seryl-tRNA(Sec) from L-serine and tRNA(Sec): step 1/1. In terms of biological role, catalyzes the attachment of serine to tRNA(Ser). Is also able to aminoacylate tRNA(Sec) with serine, to form the misacylated tRNA L-seryl-tRNA(Sec), which will be further converted into selenocysteinyl-tRNA(Sec). The protein is Serine--tRNA ligase of Sulfurihydrogenibium sp. (strain YO3AOP1).